The primary structure comprises 255 residues: uncharacterized protein (255 aa).

2 consecutive transmembrane segments (helical) span residues leucine 2–leucine 22 and valine 168–phenylalanine 188.

The protein resides in the cell membrane. This is an uncharacterized protein from Mycobacterium tuberculosis (strain ATCC 25618 / H37Rv).